Reading from the N-terminus, the 345-residue chain is Anthranilate phosphoribosyltransferase 1 (345 aa).

Residues glycine 86, 89–90 (GD), threonine 94, 96–99 (NIST), 114–122 (KHGGRGVSS), and serine 126 each bind 5-phospho-alpha-D-ribose 1-diphosphate. Position 86 (glycine 86) interacts with anthranilate. Mg(2+) is bound at residue serine 98. Residue arginine 172 participates in anthranilate binding. Mg(2+)-binding residues include aspartate 231 and glutamate 232.

The protein belongs to the anthranilate phosphoribosyltransferase family. Homodimer. Mg(2+) is required as a cofactor.

It catalyses the reaction N-(5-phospho-beta-D-ribosyl)anthranilate + diphosphate = 5-phospho-alpha-D-ribose 1-diphosphate + anthranilate. The protein operates within amino-acid biosynthesis; L-tryptophan biosynthesis; L-tryptophan from chorismate: step 2/5. In terms of biological role, catalyzes the transfer of the phosphoribosyl group of 5-phosphorylribose-1-pyrophosphate (PRPP) to anthranilate to yield N-(5'-phosphoribosyl)-anthranilate (PRA). The polypeptide is Anthranilate phosphoribosyltransferase 1 (Ralstonia nicotianae (strain ATCC BAA-1114 / GMI1000) (Ralstonia solanacearum)).